The chain runs to 144 residues: uncharacterized protein (144 aa).

A signal peptide spans 1-23 (MVIPLRNKYGILFLIAVCIMVSG). Residues 119-144 (QNGQRKTMTRIESKTGREEKDEKSKS) form a disordered region. Residues 127–144 (TRIESKTGREEKDEKSKS) show a composition bias toward basic and acidic residues.

This is an uncharacterized protein from Bacillus subtilis (strain 168).